We begin with the raw amino-acid sequence, 206 residues long: Putative 3-methyladenine DNA glycosylase (206 aa).

This sequence belongs to the DNA glycosylase MPG family.

The chain is Putative 3-methyladenine DNA glycosylase from Rhodopseudomonas palustris (strain ATCC BAA-98 / CGA009).